The sequence spans 151 residues: Sec-independent protein translocase protein TatB (151 aa).

The helical transmembrane segment at 1 to 21 (MFDVSFTELMVIGVIALVVIG) threads the bilayer. The disordered stretch occupies residues 66–151 (MDETARSMQT…DKTPPTGSAT (86 aa)). Residues 93 to 103 (AELDDTARDAS) show a composition bias toward basic and acidic residues. Composition is skewed to low complexity over residues 109 to 122 (ADAP…VASD) and 133 to 151 (APPA…GSAT).

This sequence belongs to the TatB family. As to quaternary structure, the Tat system comprises two distinct complexes: a TatABC complex, containing multiple copies of TatA, TatB and TatC subunits, and a separate TatA complex, containing only TatA subunits. Substrates initially bind to the TatABC complex, which probably triggers association of the separate TatA complex to form the active translocon.

The protein localises to the cell inner membrane. In terms of biological role, part of the twin-arginine translocation (Tat) system that transports large folded proteins containing a characteristic twin-arginine motif in their signal peptide across membranes. Together with TatC, TatB is part of a receptor directly interacting with Tat signal peptides. TatB may form an oligomeric binding site that transiently accommodates folded Tat precursor proteins before their translocation. This is Sec-independent protein translocase protein TatB from Bordetella parapertussis (strain 12822 / ATCC BAA-587 / NCTC 13253).